Here is a 277-residue protein sequence, read N- to C-terminus: Small ribosomal subunit protein uS2 (277 aa).

Residues 255 to 277 (AVATTDEASAPSAAATETTTEEG) form a disordered region. Over residues 257–277 (ATTDEASAPSAAATETTTEEG) the composition is skewed to low complexity.

It belongs to the universal ribosomal protein uS2 family.

The chain is Small ribosomal subunit protein uS2 from Mycobacteroides abscessus (strain ATCC 19977 / DSM 44196 / CCUG 20993 / CIP 104536 / JCM 13569 / NCTC 13031 / TMC 1543 / L948) (Mycobacterium abscessus).